Reading from the N-terminus, the 223-residue chain is MRVAGLIRVVVFIFTIVTMWVFLRSYTSFSRKTIRLPRWLGITPKDIQTPKSKCGLSKICPNNFFAFKISSGAANVVGPSMCFEDEIIMSPVRNNVGRGLNVALVNGSTGQVMKKDSFDMYSGDPQLLLNFLTEIPDSTLVLVASYDDPGTKMNDKIKTLFSNLGSSYAKQLGFRDSWVFVGAKDLKSKSPYEQFLKNNPETNKYDGWPELLELEGCVPRKVM.

The N-terminal stretch at 1–25 is a signal peptide; sequence MRVAGLIRVVVFIFTIVTMWVFLRS. 2 cysteine pairs are disulfide-bonded: Cys-54-Cys-82 and Cys-60-Cys-217. A GG-type lectin domain is found at 62–221; that stretch reads NNFFAFKISS…LELEGCVPRK (160 aa). Asn-106 is a glycosylation site (N-linked (GlcNAc...) asparagine).

The protein belongs to the FAM3 family.

Its subcellular location is the secreted. This is Protein FAM3D from Mus musculus (Mouse).